Reading from the N-terminus, the 198-residue chain is Pyridoxal 5'-phosphate synthase subunit PdxT (198 aa).

49 to 51 contributes to the L-glutamine binding site; that stretch reads GES. Residue Cys-81 is the Nucleophile of the active site. Residues Arg-112 and 140 to 141 each bind L-glutamine; that span reads IR. Active-site charge relay system residues include His-176 and Glu-178.

It belongs to the glutaminase PdxT/SNO family. In the presence of PdxS, forms a dodecamer of heterodimers. Only shows activity in the heterodimer.

The catalysed reaction is aldehydo-D-ribose 5-phosphate + D-glyceraldehyde 3-phosphate + L-glutamine = pyridoxal 5'-phosphate + L-glutamate + phosphate + 3 H2O + H(+). It catalyses the reaction L-glutamine + H2O = L-glutamate + NH4(+). The protein operates within cofactor biosynthesis; pyridoxal 5'-phosphate biosynthesis. Its function is as follows. Catalyzes the hydrolysis of glutamine to glutamate and ammonia as part of the biosynthesis of pyridoxal 5'-phosphate. The resulting ammonia molecule is channeled to the active site of PdxS. In Methanocella arvoryzae (strain DSM 22066 / NBRC 105507 / MRE50), this protein is Pyridoxal 5'-phosphate synthase subunit PdxT.